Consider the following 267-residue polypeptide: Tryptophan synthase alpha chain (267 aa).

Catalysis depends on proton acceptor residues Glu49 and Asp60.

Belongs to the TrpA family. In terms of assembly, tetramer of two alpha and two beta chains.

It carries out the reaction (1S,2R)-1-C-(indol-3-yl)glycerol 3-phosphate + L-serine = D-glyceraldehyde 3-phosphate + L-tryptophan + H2O. It functions in the pathway amino-acid biosynthesis; L-tryptophan biosynthesis; L-tryptophan from chorismate: step 5/5. Functionally, the alpha subunit is responsible for the aldol cleavage of indoleglycerol phosphate to indole and glyceraldehyde 3-phosphate. This Geobacter sp. (strain M21) protein is Tryptophan synthase alpha chain.